The sequence spans 146 residues: 3-dehydroquinate dehydratase (146 aa).

The active-site Proton acceptor is the Y22. Substrate-binding residues include N73, H79, and D86. The active-site Proton donor is H99. Substrate-binding positions include 100 to 101 (LS) and R110.

This sequence belongs to the type-II 3-dehydroquinase family. In terms of assembly, homododecamer.

It carries out the reaction 3-dehydroquinate = 3-dehydroshikimate + H2O. It functions in the pathway metabolic intermediate biosynthesis; chorismate biosynthesis; chorismate from D-erythrose 4-phosphate and phosphoenolpyruvate: step 3/7. Functionally, catalyzes a trans-dehydration via an enolate intermediate. This chain is 3-dehydroquinate dehydratase, found in Synechococcus sp. (strain CC9902).